Consider the following 291-residue polypeptide: Glutamate racemase (291 aa).

Substrate is bound by residues 12–13 and 44–45; these read DS and YG. The active-site Proton donor/acceptor is the Cys-75. 76–77 contacts substrate; it reads NT. Cys-187 acts as the Proton donor/acceptor in catalysis. 188–189 provides a ligand contact to substrate; sequence TH. Residues 234–247 show a composition bias toward low complexity; that stretch reads ATQAAGARAQMAPS. A disordered region spans residues 234 to 257; the sequence is ATQAAGARAQMAPSAPEPKEGTPD.

This sequence belongs to the aspartate/glutamate racemases family.

The catalysed reaction is L-glutamate = D-glutamate. Its pathway is cell wall biogenesis; peptidoglycan biosynthesis. Its function is as follows. Provides the (R)-glutamate required for cell wall biosynthesis. The polypeptide is Glutamate racemase (Koribacter versatilis (strain Ellin345)).